The chain runs to 526 residues: Probable feruloyl esterase B-2 (526 aa).

Residues 1 to 18 form the signal peptide; the sequence is MTKLSLLPLLTLASAVLA. Intrachain disulfides connect cysteine 27/cysteine 74 and cysteine 62/cysteine 113. Asparagine 52 carries N-linked (GlcNAc...) asparagine glycosylation. Asparagine 137 is a glycosylation site (N-linked (GlcNAc...) asparagine). Intrachain disulfides connect cysteine 186/cysteine 441, cysteine 255/cysteine 272, cysteine 281/cysteine 291, and cysteine 503/cysteine 525. The active-site Acyl-ester intermediate is serine 187. Asparagine 233 is a glycosylation site (N-linked (GlcNAc...) asparagine). Aspartate 256, aspartate 259, alanine 261, aspartate 263, and isoleucine 265 together coordinate Ca(2+). The N-linked (GlcNAc...) asparagine glycan is linked to asparagine 311. Active-site charge relay system residues include aspartate 400 and histidine 440. N-linked (GlcNAc...) asparagine glycosylation occurs at asparagine 516.

The protein belongs to the tannase family.

It is found in the secreted. The catalysed reaction is feruloyl-polysaccharide + H2O = ferulate + polysaccharide.. Functionally, involved in degradation of plant cell walls. Hydrolyzes the feruloyl-arabinose ester bond in arabinoxylans as well as the feruloyl-galactose and feruloyl-arabinose ester bonds in pectin. The polypeptide is Probable feruloyl esterase B-2 (faeB-2) (Aspergillus fumigatus (strain CBS 144.89 / FGSC A1163 / CEA10) (Neosartorya fumigata)).